The primary structure comprises 187 residues: Hypoxanthine/guanine phosphoribosyltransferase (187 aa).

This sequence belongs to the purine/pyrimidine phosphoribosyltransferase family. Archaeal HPRT subfamily. As to quaternary structure, homodimer.

Its subcellular location is the cytoplasm. The catalysed reaction is IMP + diphosphate = hypoxanthine + 5-phospho-alpha-D-ribose 1-diphosphate. It carries out the reaction GMP + diphosphate = guanine + 5-phospho-alpha-D-ribose 1-diphosphate. Its pathway is purine metabolism; IMP biosynthesis via salvage pathway; IMP from hypoxanthine: step 1/1. Catalyzes a salvage reaction resulting in the formation of IMP that is energically less costly than de novo synthesis. This is Hypoxanthine/guanine phosphoribosyltransferase from Ferroglobus placidus (strain DSM 10642 / AEDII12DO).